The following is a 165-amino-acid chain: Cyclic pyranopterin monophosphate synthase (165 aa).

Residues 76 to 78 (LCH) and 114 to 115 (ME) each bind substrate. Residue D129 is part of the active site.

Belongs to the MoaC family. Homohexamer; trimer of dimers.

The catalysed reaction is (8S)-3',8-cyclo-7,8-dihydroguanosine 5'-triphosphate = cyclic pyranopterin phosphate + diphosphate. The protein operates within cofactor biosynthesis; molybdopterin biosynthesis. In terms of biological role, catalyzes the conversion of (8S)-3',8-cyclo-7,8-dihydroguanosine 5'-triphosphate to cyclic pyranopterin monophosphate (cPMP). This is Cyclic pyranopterin monophosphate synthase from Brucella melitensis biotype 2 (strain ATCC 23457).